Consider the following 655-residue polypeptide: Putative calcium up-regulated protein J (655 aa).

The 142-residue stretch at lysine 40–glutamate 181 folds into the Ricin B-type lectin domain.

The protein belongs to the cup family.

The chain is Putative calcium up-regulated protein J (cupJ) from Dictyostelium discoideum (Social amoeba).